We begin with the raw amino-acid sequence, 288 residues long: Pyridoxal kinase PdxY (288 aa).

Residues S12 and 47-48 (TQ) each bind substrate. Residues D114, E151, K184, and 211 to 214 (RPLL) contribute to the ATP site. D225 is a substrate binding site.

This sequence belongs to the pyridoxine kinase family. PdxY subfamily. In terms of assembly, homodimer. It depends on Mg(2+) as a cofactor.

It catalyses the reaction pyridoxal + ATP = pyridoxal 5'-phosphate + ADP + H(+). Its pathway is cofactor metabolism; pyridoxal 5'-phosphate salvage; pyridoxal 5'-phosphate from pyridoxal: step 1/1. Its function is as follows. Pyridoxal kinase involved in the salvage pathway of pyridoxal 5'-phosphate (PLP). Catalyzes the phosphorylation of pyridoxal to PLP. In Pseudomonas syringae pv. tomato (strain ATCC BAA-871 / DC3000), this protein is Pyridoxal kinase PdxY.